Reading from the N-terminus, the 166-residue chain is Phosphodiesterase MJ0936 (166 aa).

7 residues coordinate Mn(2+): aspartate 8, histidine 10, aspartate 36, asparagine 59, histidine 97, histidine 120, and histidine 122. Aspartate 8, histidine 10, aspartate 36, asparagine 59, histidine 97, histidine 120, and histidine 122 together coordinate Ni(2+).

This sequence belongs to the metallophosphoesterase superfamily. YfcE family. In terms of assembly, monomer. It depends on Ni(2+) as a cofactor. Mn(2+) is required as a cofactor.

With respect to regulation, competitively inhibited by phosphate. In terms of biological role, shows phosphodiesterase activity. Hydrolyzes phosphodiesters bonds in the artificial chromogenic substrates bis-p-nitrophenyl phosphate (bis-pNPP), and less efficiently thymidine 5'-monophosphate p-nitrophenyl ester (pNP-TMP) and p-nitrophenylphosphorylcholine (pNPPC). No catalytic activity was found toward cAMP or cGMP, nucleotides or phospholipase substrates such as phosphatidylcholine. The physiological substrate is unknown. In Methanocaldococcus jannaschii (strain ATCC 43067 / DSM 2661 / JAL-1 / JCM 10045 / NBRC 100440) (Methanococcus jannaschii), this protein is Phosphodiesterase MJ0936.